Reading from the N-terminus, the 2771-residue chain is Kinesin-like protein KIN-12D (2771 aa).

Composition is skewed to basic and acidic residues over residues 1–13 (MSKE…RDSD) and 40–54 (KNPK…DRTP). Disordered stretches follow at residues 1-73 (MSKE…TPDK) and 117-139 (YSET…GSCY). Residues 118–131 (SETNSTQNTPTKSV) are compositionally biased toward polar residues. In terms of domain architecture, Kinesin motor spans 193–530 (NVQILIRVRP…LKFAQRAKLI (338 aa)). Residue 274 to 281 (GQTGSGKT) participates in ATP binding. Microtubules-binding regions lie at residues 400–404 (SSRSH), 431–437 (VDLAGSE), and 479–483 (HIPYR). Coiled coils occupy residues 1033–1110 (AATA…NEME), 1267–1331 (ELKQ…MKEK), 1410–1505 (IILL…YVEN), 2108–2390 (ELED…EQVK), and 2512–2677 (RERD…LAQE). The span at 2727–2736 (LKGKAKSRRS) shows a compositional bias: basic residues. Residues 2727-2771 (LKGKAKSRRSRNPERKMPSMPSPRRSWSQSPRSMSQVPFFSSLDR) are disordered. Over residues 2744 to 2762 (PSMPSPRRSWSQSPRSMSQ) the composition is skewed to low complexity.

Belongs to the TRAFAC class myosin-kinesin ATPase superfamily. Kinesin family. KIN-12 subfamily. Expressed in tissues enriched in dividing cells, such as root meristems, root primordia, and leaf primordia/young leaves.

It localises to the cytoplasm. It is found in the cytoskeleton. Its subcellular location is the phragmoplast. In terms of biological role, involved in the spatial control of cytokinesis by a proper phragmoplast guidance. This is Kinesin-like protein KIN-12D from Arabidopsis thaliana (Mouse-ear cress).